The chain runs to 413 residues: Gamma-glutamyl phosphate reductase (413 aa).

The protein belongs to the gamma-glutamyl phosphate reductase family.

The protein resides in the cytoplasm. The catalysed reaction is L-glutamate 5-semialdehyde + phosphate + NADP(+) = L-glutamyl 5-phosphate + NADPH + H(+). It functions in the pathway amino-acid biosynthesis; L-proline biosynthesis; L-glutamate 5-semialdehyde from L-glutamate: step 2/2. Catalyzes the NADPH-dependent reduction of L-glutamate 5-phosphate into L-glutamate 5-semialdehyde and phosphate. The product spontaneously undergoes cyclization to form 1-pyrroline-5-carboxylate. The polypeptide is Gamma-glutamyl phosphate reductase (Anoxybacillus flavithermus (strain DSM 21510 / WK1)).